Here is a 620-residue protein sequence, read N- to C-terminus: 1-deoxy-D-xylulose-5-phosphate synthase (620 aa).

Residues histidine 80 and 121–123 (GHS) contribute to the thiamine diphosphate site. Residue aspartate 152 participates in Mg(2+) binding. Thiamine diphosphate contacts are provided by residues 153–154 (GA), asparagine 181, tyrosine 288, and glutamate 370. Asparagine 181 provides a ligand contact to Mg(2+).

The protein belongs to the transketolase family. DXPS subfamily. In terms of assembly, homodimer. Mg(2+) serves as cofactor. It depends on thiamine diphosphate as a cofactor.

It catalyses the reaction D-glyceraldehyde 3-phosphate + pyruvate + H(+) = 1-deoxy-D-xylulose 5-phosphate + CO2. Its pathway is metabolic intermediate biosynthesis; 1-deoxy-D-xylulose 5-phosphate biosynthesis; 1-deoxy-D-xylulose 5-phosphate from D-glyceraldehyde 3-phosphate and pyruvate: step 1/1. Catalyzes the acyloin condensation reaction between C atoms 2 and 3 of pyruvate and glyceraldehyde 3-phosphate to yield 1-deoxy-D-xylulose-5-phosphate (DXP). The chain is 1-deoxy-D-xylulose-5-phosphate synthase from Escherichia coli (strain 55989 / EAEC).